Consider the following 59-residue polypeptide: Large ribosomal subunit protein bL33 (59 aa).

It belongs to the bacterial ribosomal protein bL33 family.

This Prosthecochloris aestuarii (strain DSM 271 / SK 413) protein is Large ribosomal subunit protein bL33.